Here is a 325-residue protein sequence, read N- to C-terminus: Undecaprenyl-phosphate 4-deoxy-4-formamido-L-arabinose transferase (325 aa).

2 helical membrane-spanning segments follow: residues 234-254 and 269-289; these read LLSV…LLLI and VFML…GMGL.

The protein belongs to the glycosyltransferase 2 family.

The protein localises to the cell inner membrane. It carries out the reaction UDP-4-deoxy-4-formamido-beta-L-arabinose + di-trans,octa-cis-undecaprenyl phosphate = 4-deoxy-4-formamido-alpha-L-arabinopyranosyl di-trans,octa-cis-undecaprenyl phosphate + UDP. The protein operates within glycolipid biosynthesis; 4-amino-4-deoxy-alpha-L-arabinose undecaprenyl phosphate biosynthesis; 4-amino-4-deoxy-alpha-L-arabinose undecaprenyl phosphate from UDP-4-deoxy-4-formamido-beta-L-arabinose and undecaprenyl phosphate: step 1/2. It participates in bacterial outer membrane biogenesis; lipopolysaccharide biosynthesis. In terms of biological role, catalyzes the transfer of 4-deoxy-4-formamido-L-arabinose from UDP to undecaprenyl phosphate. The modified arabinose is attached to lipid A and is required for resistance to polymyxin and cationic antimicrobial peptides. This is Undecaprenyl-phosphate 4-deoxy-4-formamido-L-arabinose transferase from Erwinia tasmaniensis (strain DSM 17950 / CFBP 7177 / CIP 109463 / NCPPB 4357 / Et1/99).